A 126-amino-acid polypeptide reads, in one-letter code: MRYGEKEIKEFDVENMEIWPNDAKNDYIIKITLPEFMCCCPRSGYPDFATIYLEYMPDKFVIELKAIKLYINTFMYRNVSHEASINEIYNTLKDKLKPKWIKVVGDFNPRGNVHTVIECRSDMVVP.

Residue Cys40 is the Thioimide intermediate of the active site. The Proton donor role is filled by Asp47. Substrate-binding positions include 62 to 64 (IEL) and 81 to 82 (HE).

Belongs to the GTP cyclohydrolase I family. QueF type 1 subfamily.

The protein localises to the cytoplasm. The catalysed reaction is 7-aminomethyl-7-carbaguanine + 2 NADP(+) = 7-cyano-7-deazaguanine + 2 NADPH + 3 H(+). It functions in the pathway tRNA modification; tRNA-queuosine biosynthesis. Its function is as follows. Catalyzes the NADPH-dependent reduction of 7-cyano-7-deazaguanine (preQ0) to 7-aminomethyl-7-deazaguanine (preQ1). This chain is NADPH-dependent 7-cyano-7-deazaguanine reductase, found in Campylobacter jejuni subsp. doylei (strain ATCC BAA-1458 / RM4099 / 269.97).